Reading from the N-terminus, the 932-residue chain is Glycine dehydrogenase (decarboxylating) (932 aa).

Lys-685 carries the post-translational modification N6-(pyridoxal phosphate)lysine.

This sequence belongs to the GcvP family. As to quaternary structure, the glycine cleavage system is composed of four proteins: P, T, L and H. Requires pyridoxal 5'-phosphate as cofactor.

The catalysed reaction is N(6)-[(R)-lipoyl]-L-lysyl-[glycine-cleavage complex H protein] + glycine + H(+) = N(6)-[(R)-S(8)-aminomethyldihydrolipoyl]-L-lysyl-[glycine-cleavage complex H protein] + CO2. Functionally, the glycine cleavage system catalyzes the degradation of glycine. The P protein binds the alpha-amino group of glycine through its pyridoxal phosphate cofactor; CO(2) is released and the remaining methylamine moiety is then transferred to the lipoamide cofactor of the H protein. The polypeptide is Glycine dehydrogenase (decarboxylating) (Brucella melitensis biotype 2 (strain ATCC 23457)).